A 213-amino-acid chain; its full sequence is Orotate phosphoribosyltransferase (213 aa).

Residue Lys-26 participates in 5-phospho-alpha-D-ribose 1-diphosphate binding. Residue 34–35 (FF) coordinates orotate. Residues 72–73 (YK), Arg-99, Lys-100, Lys-103, His-105, and 124–132 (DDVITAGTA) each bind 5-phospho-alpha-D-ribose 1-diphosphate. Residues Thr-128 and Arg-156 each contribute to the orotate site.

The protein belongs to the purine/pyrimidine phosphoribosyltransferase family. PyrE subfamily. Homodimer. The cofactor is Mg(2+).

The catalysed reaction is orotidine 5'-phosphate + diphosphate = orotate + 5-phospho-alpha-D-ribose 1-diphosphate. It participates in pyrimidine metabolism; UMP biosynthesis via de novo pathway; UMP from orotate: step 1/2. In terms of biological role, catalyzes the transfer of a ribosyl phosphate group from 5-phosphoribose 1-diphosphate to orotate, leading to the formation of orotidine monophosphate (OMP). This is Orotate phosphoribosyltransferase from Klebsiella pneumoniae (strain 342).